The primary structure comprises 835 residues: Pre-mRNA-processing protein 40C (835 aa).

A compositionally biased stretch (polar residues) spans 1-20 (MEGENTTDPPYTTAASSGQS). A disordered region spans residues 1-22 (MEGENTTDPPYTTAASSGQSIF). 2 consecutive WW domains span residues 243-276 (GNRLDAWTAHKSEAGVLYYYNSVTGQSTYEKPPG) and 295-328 (SLPGTDWALVSTNDGKKYYYNNKTKVSSWQIPAE). The segment at 397–459 (SGMPVSSTIT…DSGPSKEECS (63 aa)) is disordered. Polar residues predominate over residues 400–428 (PVSSTITSEANSGKTTEVTPSGESGNSTG). FF domains lie at 455–509 (KEEC…YVKT), 519–577 (RAAH…RVLS), and 590–643 (RAAA…YIAE). Disordered regions lie at residues 649–677 (RGDDHEMKARDEEDKLRERERELRKRKER) and 714–738 (TESKPILERDPQKRASNPDLEPADK). 2 consecutive FF domains span residues 691 to 748 (RKEA…HVKS) and 750 to 815 (YERC…YVED).

The protein belongs to the PRPF40 family. In terms of assembly, interacts (via the WW domains) with the phosphorylated C-terminal domain of NRPB1 (via CTD domain). In terms of tissue distribution, expressed in roots, shoots, rosette leaves, cauline leaves, stems and flowers.

Its subcellular location is the nucleus. Its function is as follows. Binds the phosphorylated C-terminal domain (CTD) of the largest subunit of RNA polymerase II and functions as a scaffold for RNA processing machineries. May be involved in pre-mRNA splicing. In Arabidopsis thaliana (Mouse-ear cress), this protein is Pre-mRNA-processing protein 40C.